A 509-amino-acid polypeptide reads, in one-letter code: ATP synthase subunit alpha (509 aa).

An ATP-binding site is contributed by 169–176 (GDRQTGKT).

This sequence belongs to the ATPase alpha/beta chains family. As to quaternary structure, F-type ATPases have 2 components, CF(1) - the catalytic core - and CF(0) - the membrane proton channel. CF(1) has five subunits: alpha(3), beta(3), gamma(1), delta(1), epsilon(1). CF(0) has three main subunits: a(1), b(2) and c(9-12). The alpha and beta chains form an alternating ring which encloses part of the gamma chain. CF(1) is attached to CF(0) by a central stalk formed by the gamma and epsilon chains, while a peripheral stalk is formed by the delta and b chains.

It localises to the cell inner membrane. It carries out the reaction ATP + H2O + 4 H(+)(in) = ADP + phosphate + 5 H(+)(out). Its function is as follows. Produces ATP from ADP in the presence of a proton gradient across the membrane. The alpha chain is a regulatory subunit. In Methylorubrum extorquens (strain CM4 / NCIMB 13688) (Methylobacterium extorquens), this protein is ATP synthase subunit alpha.